A 308-amino-acid chain; its full sequence is Folate transporter 1, chloroplastic (308 aa).

Solcar repeat units follow at residues 4–94 (SWQW…AKQR), 104–192 (LSPA…LRKI), and 213–299 (ADYA…VLKL). 6 helical membrane-spanning segments follow: residues 10–30 (ATAGAVAGFATVAAMHSLDVV), 74–91 (VIGSTVSWGLYFFFYGRA), 110–130 (LASAAEAGALVCLCTNPIWLV), 164–184 (ALYKGIVPGLVLVSHGAIQFT), 216–236 (AALGGSSKVAAVLLTYPFQVI), and 274–293 (GLTANLLKNVPASSITFIVY).

The protein belongs to the mitochondrial carrier (TC 2.A.29) family. As to expression, ubiquitous.

Its subcellular location is the plastid. The protein resides in the chloroplast membrane. Mediates folate import into chloroplast. The chain is Folate transporter 1, chloroplastic (FOLT1) from Arabidopsis thaliana (Mouse-ear cress).